A 394-amino-acid polypeptide reads, in one-letter code: Tyrosine--tRNA ligase, cytoplasmic (394 aa).

Ser2 is modified (N-acetylserine). L-tyrosine is bound at residue Tyr43. The 'HIGH' region motif lies at 48–56 (PTGRPHCGY). Residues Tyr170, Gln174, Asp177, and Gln192 each coordinate L-tyrosine. Residues 227 to 231 (KMSAS) carry the 'KMSKS' region motif. Ser235 is modified (phosphoserine). Positions 348–394 (QEASEKGYPVATPQKSKKAKKPKNKGTKYPGATKTNEIATKLEETKL) are disordered. Phosphothreonine is present on Thr359. A Nuclear localization signal motif is present at residues 360–378 (PQKSKKAKKPKNKGTKYPG). The span at 362 to 373 (KSKKAKKPKNKG) shows a compositional bias: basic residues.

It belongs to the class-I aminoacyl-tRNA synthetase family. Homodimer. Interacts with KNR4/SMI1.

Its subcellular location is the cytoplasm. It localises to the nucleus. It catalyses the reaction tRNA(Tyr) + L-tyrosine + ATP = L-tyrosyl-tRNA(Tyr) + AMP + diphosphate + H(+). Its activity is regulated as follows. Inhibited by N-ethylmaleimide and p-chloromercuribenzoate. Functionally, catalyzes the attachment of L-tyrosine to tRNA(Tyr) in a two-step reaction: L-tyrosine is first activated by ATP to form Tyr-AMP and then transferred to the acceptor end of tRNA(Tyr). The specificity determinants on tRNA(Tyr) are the base pair C1-G72, the discriminator residue A73, and the three anticodon bases G34, U35 and A36. Also involved in nuclear tRNA export. Also attaches D-Tyr to tRNA(Tyr), this reaction is about 150-fold less efficient than attachment of L-Tyr. In Saccharomyces cerevisiae (strain ATCC 204508 / S288c) (Baker's yeast), this protein is Tyrosine--tRNA ligase, cytoplasmic.